The following is a 92-amino-acid chain: Small ribosomal subunit protein uS19c (92 aa).

This sequence belongs to the universal ribosomal protein uS19 family.

The protein localises to the plastid. The protein resides in the chloroplast. Protein S19 forms a complex with S13 that binds strongly to the 16S ribosomal RNA. This is Small ribosomal subunit protein uS19c from Cyanidium caldarium (Red alga).